Consider the following 207-residue polypeptide: Riboflavin synthase (207 aa).

2 Lumazine-binding repeats span residues 1-94 (MFTG…LGGH) and 95-191 (IVQG…INYL). 2,4-dihydroxypteridine-binding positions include 4–6 (GLV), 45–47 (CLT), 59–64 (DVSPET), 98–100 (GHV), K133, 142–144 (SLT), and 156–161 (NIIPHT).

Homotrimer.

It catalyses the reaction 2 6,7-dimethyl-8-(1-D-ribityl)lumazine + H(+) = 5-amino-6-(D-ribitylamino)uracil + riboflavin. It functions in the pathway cofactor biosynthesis; riboflavin biosynthesis; riboflavin from 2-hydroxy-3-oxobutyl phosphate and 5-amino-6-(D-ribitylamino)uracil: step 2/2. Catalyzes the dismutation of two molecules of 6,7-dimethyl-8-ribityllumazine, resulting in the formation of riboflavin and 5-amino-6-(D-ribitylamino)uracil. The protein is Riboflavin synthase (ribE) of Aquifex aeolicus (strain VF5).